The following is a 1025-amino-acid chain: Multidrug resistance protein MdtC (1025 aa).

Helical transmembrane passes span 3-23 (FFAL…AITL), 333-353 (EVEQ…FLFL), 360-380 (IIPA…MYLC), 387-407 (LSLM…IVVL), 431-451 (VGFT…PLLL), 463-483 (FAVT…TLTP), 528-548 (LVGV…ISIP), 853-873 (VILI…LYES), 875-895 (VHPL…LLAL), 897-917 (LFNA…IGIV), 953-973 (PIMM…LSGG), and 984-1004 (ITIV…TPVV).

The protein belongs to the resistance-nodulation-cell division (RND) (TC 2.A.6) family. MdtC subfamily. In terms of assembly, part of a tripartite efflux system composed of MdtA, MdtB and MdtC. MdtC forms a heteromultimer with MdtB.

It localises to the cell inner membrane. In terms of biological role, the MdtABC tripartite complex confers resistance against novobiocin and deoxycholate. This is Multidrug resistance protein MdtC from Escherichia coli (strain K12 / MC4100 / BW2952).